Here is a 183-residue protein sequence, read N- to C-terminus: Probable RNA 2'-phosphotransferase (183 aa).

It belongs to the KptA/TPT1 family.

Removes the 2'-phosphate from RNA via an intermediate in which the phosphate is ADP-ribosylated by NAD followed by a presumed transesterification to release the RNA and generate ADP-ribose 1''-2''-cyclic phosphate (APPR&gt;P). May function as an ADP-ribosylase. The chain is Probable RNA 2'-phosphotransferase from Clostridium perfringens (strain 13 / Type A).